The sequence spans 310 residues: D-alanyl-D-alanine endopeptidase (310 aa).

Residues 1-25 (MPKFRVSLFSLALMLAVPFAPQAVA) form the signal peptide. Ser67 functions as the Acyl-ester intermediate in the catalytic mechanism. Catalysis depends on Lys70, which acts as the Proton acceptor. The active site involves Ser124. Position 231 (Lys231) interacts with substrate.

Belongs to the peptidase S11 family. In terms of processing, pbp8 is a proteolytic product of Pbp7.

It localises to the periplasm. Cell wall formation. May play a specialized role in remodeling the cell wall. Specifically hydrolyzes the DD-diaminopimelate-alanine bonds in high-molecular-mass murein sacculi. The protein is D-alanyl-D-alanine endopeptidase (pbpG) of Escherichia coli (strain K12).